The primary structure comprises 210 residues: PEP-dependent dihydroxyacetone kinase, ADP-binding subunit DhaL (210 aa).

Residues 6–206 enclose the DhaL domain; the sequence is TQIVNWLTRC…VMFMMQMLAL (201 aa). The Mg(2+) site is built by Asp30, Asp35, and Asp37. ADP contacts are provided by residues 38 to 41, 79 to 80, Gly121, Met130, Arg178, and 191 to 193; these read HGLN, AS, and DPG.

In terms of assembly, homodimer. The dihydroxyacetone kinase complex is composed of a homodimer of DhaM, a homodimer of DhaK and the subunit DhaL. DhaL also forms a complex with DhaR. Mg(2+) serves as cofactor.

It is found in the cytoplasm. It catalyses the reaction dihydroxyacetone + phosphoenolpyruvate = dihydroxyacetone phosphate + pyruvate. It functions in the pathway polyol metabolism; glycerol degradation. ADP-binding subunit of the dihydroxyacetone kinase, which is responsible for the phosphoenolpyruvate (PEP)-dependent phosphorylation of dihydroxyacetone. DhaL-ADP is converted to DhaL-ATP via a phosphoryl group transfer from DhaM and transmits it to dihydroxyacetone bound to DhaK. DhaL also acts as coactivator of the transcription activator DhaR by binding to the sensor domain of DhaR. In the presence of dihydroxyacetone, DhaL-ADP displaces DhaK and stimulates DhaR activity. In the absence of dihydroxyacetone, DhaL-ADP is converted by the PTS to DhaL-ATP, which does not bind to DhaR. This is PEP-dependent dihydroxyacetone kinase, ADP-binding subunit DhaL from Escherichia coli (strain K12).